Here is a 252-residue protein sequence, read N- to C-terminus: Tumor necrosis factor ligand superfamily member 15 (252 aa).

Topologically, residues 1 to 39 are cytoplasmic; sequence MAEELGLGFGEGVPVEVLPEGCRHRPEARAGLAARSKAC. The chain crosses the membrane as a helical; Signal-anchor for type II membrane protein span at residues 40–60; the sequence is LALTCCLLSFPILAGLSTLLM. Residues 61–252 are Extracellular-facing; it reads AGQLRVPGKD…DKTFFGAFLL (192 aa). Residues 96-252 enclose the THD domain; sequence PRAHLTIKKQ…DKTFFGAFLL (157 aa). N-linked (GlcNAc...) asparagine glycosylation occurs at N137. A disulfide bridge connects residues C163 and C203. Residue N230 is glycosylated (N-linked (GlcNAc...) asparagine).

The protein belongs to the tumor necrosis factor family. As to quaternary structure, homotrimer.

The protein resides in the membrane. Its function is as follows. Receptor for TNFRSF25 and TNFRSF6B. Mediates activation of NF-kappa-B. Inhibits vascular endothelial growth and angiogenesis (in vitro). Promotes activation of caspases and apoptosis. Promotes splenocyte alloactivation. The sequence is that of Tumor necrosis factor ligand superfamily member 15 (Tnfsf15) from Mus musculus (Mouse).